Reading from the N-terminus, the 315-residue chain is Protein phosphatase PTC7 homolog fig (315 aa).

A PPM-type phosphatase domain is found at 54–309 (KHSIASAKDN…DDITVILATV (256 aa)). Mn(2+) contacts are provided by Asp86, Gly87, and Asp231.

Belongs to the PP2C family. Mg(2+) is required as a cofactor. It depends on Mn(2+) as a cofactor.

The catalysed reaction is O-phospho-L-seryl-[protein] + H2O = L-seryl-[protein] + phosphate. It carries out the reaction O-phospho-L-threonyl-[protein] + H2O = L-threonyl-[protein] + phosphate. In Drosophila willistoni (Fruit fly), this protein is Protein phosphatase PTC7 homolog fig.